The following is a 1257-amino-acid chain: Phosphatidylinositol 3,4,5-trisphosphate 5-phosphatase 2 (1257 aa).

Residues 21–117 form the SH2 domain; it reads WYHRDLSRAA…GLVCALLLPV (97 aa). Positions 119 to 132 are enriched in basic and acidic residues; sequence GEREPDPPDDRDAS. A disordered region spans residues 119–181; sequence GEREPDPPDD…ESTPNGLSTV (63 aa). At S132 the chain carries Phosphoserine. Residues 156–166 show a composition bias toward pro residues; that stretch reads PSSPLPAPETP. Position 165 is a phosphothreonine (T165). 2 positions are modified to phosphoserine: S241 and S353. Position 887 is a phosphotyrosine (Y887). At S891 the chain carries Phosphoserine. The interval 897–986 is disordered; the sequence is TGAKSKAPSV…PPKNSFNNPA (90 aa). The span at 939–951 shows a compositional bias: pro residues; it reads PPPTGRPPAPPRA. The SH3-binding motif lies at 945-950; sequence PPAPPR. The segment covering 952-966 has biased composition (basic and acidic residues); it reads VPREESLNPRLKSEG. The NPXY motif signature appears at 984-987; the sequence is NPAY. A Phosphotyrosine modification is found at Y987. The tract at residues 1004 to 1115 is disordered; that stretch reads SFARAPIPPT…PASTFLEEVA (112 aa). Composition is skewed to pro residues over residues 1049 to 1060 and 1088 to 1104; these read LPPPDFPPPPLP and GPPP…PPGT. At S1132 the chain carries Phosphoserine. Phosphotyrosine occurs at positions 1136 and 1161. The SAM domain maps to 1195 to 1257; sequence LGEAGMGAWL…LLLDTLQLSK (63 aa). Position 1256 is a phosphoserine (S1256).

This sequence belongs to the inositol 1,4,5-trisphosphate 5-phosphatase family. As to quaternary structure, interacts with tyrosine phosphorylated form of SHC1. Interacts with EGFR. Upon stimulation by the EGF signaling pathway, it forms a complex with SHC1 and EGFR. Interacts with cytoskeletal protein SORBS3/vinexin, promoting its localization to the periphery of cells. Forms a complex with filamin (FLNA or FLNB), actin, GPIb (GP1BA or GP1BB) that regulates cortical and submembraneous actin. Interacts with c-Met/MET, when c-Met/MET is phosphorylated on 'Tyr-1356'. Interacts with p130Cas/BCAR1. Interacts with CENTD3/ARAP3 via its SAM domain. Interacts with c-Cbl/CBL and CAP/SORBS1. Interacts with activated EPHA2 receptor. Interacts with receptors FCGR2A. Interacts with FCGR2B. Interacts with tyrosine kinase ABL1. Interacts with tyrosine kinase TEC. Interacts with CSF1R. Interacts (via N-terminus) with SH3YL1 (via SH3 domain). Interacts (via SH2 domain) with tyrosine phosphorylated KLRC1 (via ITIM). Interacts with NEDD9/HEF1. Tyrosine phosphorylated by the members of the SRC family after exposure to a diverse array of extracellular stimuli such as insulin, growth factors such as EGF or PDGF, chemokines, integrin ligands and hypertonic and oxidative stress. May be phosphorylated upon IgG receptor FCGR2B-binding. Phosphorylated at Tyr-987 following cell attachment and spreading. Phosphorylated at Tyr-1161 following EGF signaling pathway stimulation.

The protein resides in the cytoplasm. It is found in the cytosol. The protein localises to the cytoskeleton. Its subcellular location is the membrane. It localises to the cell projection. The protein resides in the filopodium. It is found in the lamellipodium. The protein localises to the basal cell membrane. Its subcellular location is the nucleus. It localises to the nucleus speckle. The protein resides in the spindle pole. The enzyme catalyses a 1,2-diacyl-sn-glycero-3-phospho-(1D-myo-inositol-3,4,5-trisphosphate) + H2O = a 1,2-diacyl-sn-glycero-3-phospho-(1D-myo-inositol-3,4-bisphosphate) + phosphate. The catalysed reaction is 1,2-dioctanoyl-sn-glycero-3-phospho-(1D-myo-inositol-3,4,5-trisphosphate) + H2O = 1,2-dioctanoyl-sn-glycero-3-phospho-(1D-myo-inositol-3,4-bisphosphate) + phosphate. It carries out the reaction 1,2-dihexadecanoyl-sn-glycero-3-phospho-(1D-myo-inositol-3,4,5-trisphosphate) + H2O = 1,2-dihexadecanoyl-sn-glycero-3-phospho-(1D-myo-inositol-3,4-bisphosphate) + phosphate. Its activity is regulated as follows. Activated upon translocation to the sites of synthesis of PtdIns(3,4,5)P3 in the membrane. Enzymatic activity is enhanced in the presence of phosphatidylserine. Phosphatidylinositol (PtdIns) phosphatase that specifically hydrolyzes the 5-phosphate of phosphatidylinositol-3,4,5-trisphosphate (PtdIns(3,4,5)P3) to produce PtdIns(3,4)P2, thereby negatively regulating the PI3K (phosphoinositide 3-kinase) pathways. Required for correct mitotic spindle orientation and therefore progression of mitosis. Plays a central role in regulation of PI3K-dependent insulin signaling, although the precise molecular mechanisms and signaling pathways remain unclear. While overexpression reduces both insulin-stimulated MAP kinase and Akt activation, its absence does not affect insulin signaling or GLUT4 trafficking. Confers resistance to dietary obesity. May act by regulating AKT2, but not AKT1, phosphorylation at the plasma membrane. Part of a signaling pathway that regulates actin cytoskeleton remodeling. Required for the maintenance and dynamic remodeling of actin structures as well as in endocytosis, having a major impact on ligand-induced EGFR internalization and degradation. Participates in regulation of cortical and submembraneous actin by hydrolyzing PtdIns(3,4,5)P3 thereby regulating membrane ruffling. Regulates cell adhesion and cell spreading. Required for HGF-mediated lamellipodium formation, cell scattering and spreading. Acts as a negative regulator of EPHA2 receptor endocytosis by inhibiting via PI3K-dependent Rac1 activation. Acts as a regulator of neuritogenesis by regulating PtdIns(3,4,5)P3 level and is required to form an initial protrusive pattern, and later, maintain proper neurite outgrowth. Acts as a negative regulator of the FC-gamma-RIIA receptor (FCGR2A). Mediates signaling from the FC-gamma-RIIB receptor (FCGR2B), playing a central role in terminating signal transduction from activating immune/hematopoietic cell receptor systems. Involved in EGF signaling pathway. Upon stimulation by EGF, it is recruited by EGFR and dephosphorylates PtdIns(3,4,5)P3. Plays a negative role in regulating the PI3K-PKB pathway, possibly by inhibiting PKB activity. Down-regulates Fc-gamma-R-mediated phagocytosis in macrophages independently of INPP5D/SHIP1. In macrophages, down-regulates NF-kappa-B-dependent gene transcription by regulating macrophage colony-stimulating factor (M-CSF)-induced signaling. Plays a role in the localization of AURKA and NEDD9/HEF1 to the basolateral membrane at interphase in polarized cysts, thereby mediates cell cycle homeostasis, cell polarization and cilia assembly. Additionally promotion of cilia growth is also facilitated by hydrolysis of (PtdIns(3,4,5)P3) to PtdIns(3,4)P2. Promotes formation of apical membrane-initiation sites during the initial stages of lumen formation via Rho family-induced actin filament organization and CTNNB1 localization to cell-cell contacts. May also hydrolyze PtdIns(1,3,4,5)P4, and could thus affect the levels of the higher inositol polyphosphates like InsP6. Involved in endochondral ossification. This Rattus norvegicus (Rat) protein is Phosphatidylinositol 3,4,5-trisphosphate 5-phosphatase 2.